The sequence spans 309 residues: Homoserine O-succinyltransferase (309 aa).

Cys142 serves as the catalytic Acyl-thioester intermediate. Substrate is bound by residues Lys163 and Ser192. Residue His235 is the Proton acceptor of the active site. Residue Glu237 is part of the active site. Position 249 (Arg249) interacts with substrate.

This sequence belongs to the MetA family.

The protein localises to the cytoplasm. It carries out the reaction L-homoserine + succinyl-CoA = O-succinyl-L-homoserine + CoA. Its pathway is amino-acid biosynthesis; L-methionine biosynthesis via de novo pathway; O-succinyl-L-homoserine from L-homoserine: step 1/1. Transfers a succinyl group from succinyl-CoA to L-homoserine, forming succinyl-L-homoserine. This is Homoserine O-succinyltransferase from Serratia proteamaculans (strain 568).